The following is a 198-amino-acid chain: Transmembrane gamma-carboxyglutamic acid protein 2 (198 aa).

Positions 1-17 (MRGRPSLLLVYMGLATC) are cleaved as a signal peptide. The propeptide occupies 18–51 (LDTSPHREQNQVLDIFLDAPEAQSFLVGRRRFPR). Residues 52 to 98 (ANHWDLELLTPGNLERECLEERCSWEEAREYFEDNTLTERFWESYTY) enclose the Gla domain. The Extracellular portion of the chain corresponds to 52–111 (ANHWDLELLTPGNLERECLEERCSWEEAREYFEDNTLTERFWESYTYNGKGGRGRVDVAG). Cys69 and Cys74 are oxidised to a cystine. Glu72 carries the 4-carboxyglutamate modification. Residues 112–132 (LAVGLTSGILLIVLAGLGAFW) form a helical membrane-spanning segment. Topologically, residues 133 to 198 (YLHYRRRRLR…PPYSSLRRPH (66 aa)) are cytoplasmic. The interval 156-198 (PLSPQTPQSPPLPPGLPTYEQALAASGVHDAPPPPYSSLRRPH) is disordered. Over residues 162 to 171 (PQSPPLPPGL) the composition is skewed to pro residues. An LPXY motif; mediates binding to WW domain-containing proteins motif is present at residues 171–174 (LPTY). The PPXY motif; mediates binding to WW domain-containing proteins motif lies at 188–191 (PPPY).

In terms of assembly, interacts with NEDD4. Interacts with transcriptional coactivator YAP1. Gamma-carboxyglutamate residues are formed by vitamin K dependent carboxylation. These residues are essential for the binding of calcium.

Its subcellular location is the cell membrane. This is Transmembrane gamma-carboxyglutamic acid protein 2 (Prrg2) from Mus musculus (Mouse).